The chain runs to 397 residues: G2/mitotic-specific cyclin-B2 (397 aa).

Disordered stretches follow at residues M1 to V20 and K64 to V97. T8 is subject to Phosphothreonine. S11 is subject to Phosphoserine. The segment covering K64–P74 has biased composition (polar residues). Residues S77, S98, and S391 each carry the phosphoserine modification.

The protein belongs to the cyclin family. Cyclin AB subfamily. Interacts with the CDK1 protein kinase to form a serine/threonine kinase holoenzyme complex also known as maturation promoting factor (MPF). The cyclin subunit imparts substrate specificity to the complex.

Functionally, essential for the control of the cell cycle at the G2/M (mitosis) transition. This Mesocricetus auratus (Golden hamster) protein is G2/mitotic-specific cyclin-B2 (CCNB2).